A 116-amino-acid polypeptide reads, in one-letter code: Putative pterin-4-alpha-carbinolamine dehydratase (116 aa).

The protein belongs to the pterin-4-alpha-carbinolamine dehydratase family.

It catalyses the reaction (4aS,6R)-4a-hydroxy-L-erythro-5,6,7,8-tetrahydrobiopterin = (6R)-L-erythro-6,7-dihydrobiopterin + H2O. The chain is Putative pterin-4-alpha-carbinolamine dehydratase from Microcystis aeruginosa (strain NIES-843 / IAM M-2473).